A 181-amino-acid polypeptide reads, in one-letter code: NAD(P)H-quinone oxidoreductase subunit 6, chloroplastic (181 aa).

5 helical membrane-spanning segments follow: residues 10–30, 33–53, 62–82, 98–118, and 153–173; these read TLLF…VVLL, VIYS…LYLL, AQVL…IMLV, IISA…IFTT, and LFPF…AITI.

The protein belongs to the complex I subunit 6 family. In terms of assembly, NDH is composed of at least 16 different subunits, 5 of which are encoded in the nucleus.

Its subcellular location is the plastid. The protein localises to the chloroplast thylakoid membrane. It catalyses the reaction a plastoquinone + NADH + (n+1) H(+)(in) = a plastoquinol + NAD(+) + n H(+)(out). The catalysed reaction is a plastoquinone + NADPH + (n+1) H(+)(in) = a plastoquinol + NADP(+) + n H(+)(out). NDH shuttles electrons from NAD(P)H:plastoquinone, via FMN and iron-sulfur (Fe-S) centers, to quinones in the photosynthetic chain and possibly in a chloroplast respiratory chain. The immediate electron acceptor for the enzyme in this species is believed to be plastoquinone. Couples the redox reaction to proton translocation, and thus conserves the redox energy in a proton gradient. This Zygnema circumcarinatum (Green alga) protein is NAD(P)H-quinone oxidoreductase subunit 6, chloroplastic (ndhG).